The chain runs to 340 residues: Guanine nucleotide-binding protein G(I)/G(S)/G(T) subunit beta-3 (340 aa).

WD repeat units lie at residues 53-83 (GHLA…IVWD), 95-125 (LRSS…SIYS), 141-170 (AHTG…ALWD), 182-212 (GHTG…KLWD), 224-254 (GHES…RLFD), 268-298 (SIIC…NIWD), and 310-340 (GHDN…KVWN).

Belongs to the WD repeat G protein beta family. In terms of assembly, g proteins are composed of 3 units, alpha, beta and gamma. Interacts with RASD2.

The protein resides in the cytoplasm. The protein localises to the perinuclear region. Guanine nucleotide-binding proteins (G proteins) are involved as a modulator or transducer in various transmembrane signaling systems. The beta and gamma chains are required for the GTPase activity, for replacement of GDP by GTP, and for G protein-effector interaction. The polypeptide is Guanine nucleotide-binding protein G(I)/G(S)/G(T) subunit beta-3 (GNB3) (Canis lupus familiaris (Dog)).